Here is a 130-residue protein sequence, read N- to C-terminus: Small ribosomal subunit protein uS8 (130 aa).

It belongs to the universal ribosomal protein uS8 family.

The protein localises to the cytoplasm. The polypeptide is Small ribosomal subunit protein uS8 (RPS15A) (Daucus carota (Wild carrot)).